Here is a 789-residue protein sequence, read N- to C-terminus: Disintegrin and metalloproteinase domain-containing protein 7 (789 aa).

A signal peptide spans 1-25; that stretch reads MFPTGIFLMSVLISQMQGRGIVGVE. The propeptide occupies 26-176; the sequence is GQELVHPKKL…NYSCEGLNFT (151 aa). N-linked (GlcNAc...) asparagine glycosylation is found at N84, N167, and N174. Over 177–668 the chain is Extracellular; the sequence is KKSTLIDAKI…WGEALNLTSV (492 aa). The region spanning 199-393 is the Peptidase M12B domain; the sequence is KFIELFVVAD…QKPACILNNP (195 aa). 4 cysteine pairs are disulfide-bonded: C310–C388, C350–C372, C352–C357, and C459–C479. The region spanning 401 to 487 is the Disintegrin domain; sequence YPFCGNKKVD…ECPKDESQAN (87 aa). N-linked (GlcNAc...) asparagine glycosylation is found at N583, N628, and N664. The helical transmembrane segment at 669 to 689 threads the bilayer; sequence SIMVVVLVMVIIGVGLVILLI. The Cytoplasmic portion of the chain corresponds to 690-789; it reads RYQKCIKMKQ…DSQSDCTRLG (100 aa). A compositionally biased stretch (basic and acidic residues) spans 762–771; sequence DPRGIADPKQ. The disordered stretch occupies residues 762-789; that stretch reads DPRGIADPKQNDNMNLNLDSQSDCTRLG. The span at 772 to 789 shows a compositional bias: polar residues; the sequence is NDNMNLNLDSQSDCTRLG.

In terms of assembly, interacts with ITM2B in sperm; the interaction increases following capacitation. Interacts with HSPA5 and CANX. As to expression, expressed specifically in the caput region of the epididymis (at protein level).

The protein resides in the membrane. In terms of biological role, required for normal male fertility via maintenance of epithelial cell morphology in the caput epididymis and subsequently correct epididymis lumen structure required for sperm development. Plays a role in sperm motility, flagella morphology and tyrosine phosphorylation during sperm capacitance. Plays a role in normal expression levels of HSPA5, ITM2B and ADAM2 in sperm both prior to and post-capacitation. This is a non catalytic metalloprotease-like protein. In Rattus norvegicus (Rat), this protein is Disintegrin and metalloproteinase domain-containing protein 7.